The chain runs to 251 residues: Pyruvate formate-lyase-activating enzyme (251 aa).

In terms of domain architecture, Radical SAM core spans 15–244 (VDGPGLRYIL…KEAYRYVNFN (230 aa)). [4Fe-4S] cluster contacts are provided by Cys-29, Cys-33, and Cys-36. Residues 35–37 (YCH), Gly-79, 134–136 (DIK), and His-207 contribute to the S-adenosyl-L-methionine site.

The protein belongs to the organic radical-activating enzymes family. [4Fe-4S] cluster serves as cofactor.

It is found in the cytoplasm. The catalysed reaction is glycyl-[formate C-acetyltransferase] + reduced [flavodoxin] + S-adenosyl-L-methionine = glycin-2-yl radical-[formate C-acetyltransferase] + semiquinone [flavodoxin] + 5'-deoxyadenosine + L-methionine + H(+). In terms of biological role, activation of pyruvate formate-lyase under anaerobic conditions by generation of an organic free radical, using S-adenosylmethionine and reduced flavodoxin as cosubstrates to produce 5'-deoxy-adenosine. This chain is Pyruvate formate-lyase-activating enzyme (pflA), found in Staphylococcus epidermidis (strain ATCC 12228 / FDA PCI 1200).